The chain runs to 707 residues: Signal transducer and activator of transcription A (707 aa).

The segment covering 70-89 (LNQSDQFNLGRSNNLTPRTN) has biased composition (polar residues). Residues 70–246 (LNQSDQFNLG…GNPNLSSPQP (177 aa)) form a disordered region. The span at 90–111 (QLQQLQQQQQQQQQPQQQQQQQ) shows a compositional bias: low complexity. Residues 112 to 121 (TYGTQSPIHM) show a composition bias toward polar residues. Residues 142–238 (QQSYNNNNSN…QQQQQQQQGN (97 aa)) show a composition bias toward low complexity. Positions 242–356 (SSPQPILDTI…IQSILNPQHS (115 aa)) form a coiled coil. Residues 443-487 (KFLAGTRKCSVNLKFGVNIRDLDNVTTTVESDASNPFVVITNECQ) mediate DNA binding. The 104-residue stretch at 583–686 (WQEGIIYGYM…FLKLHKDTAL (104 aa)) folds into the SH2 domain. The residue at position 702 (Y702) is a Phosphotyrosine.

This sequence belongs to the transcription factor STAT family. Monomer, in the absence of tyrosine phosphorylation. Homodimer, or heterodimer with another family member, when tyrosine phosphorylated. Tyrosine phosphorylated in response to cAMP. Not tyrosine phosphorylated in growing cells. Tyrosine phosphorylation is first detected at the tight mound stage, continues throughout the slug stage and early culmination, and starts to decrease at mid-culmination. Barely detectable in fruiting bodies.

It localises to the cytoplasm. It is found in the nucleus. Transcription factor that binds to 5'-TTGAATTGA-3' elements in the promoter region of target genes. Functions as a repressor of the ecmB gene. Regulates the differentiation of prestalk cells during development. The chain is Signal transducer and activator of transcription A (dstA) from Dictyostelium discoideum (Social amoeba).